Here is a 197-residue protein sequence, read N- to C-terminus: Probable nicotinate-nucleotide adenylyltransferase (197 aa).

This sequence belongs to the NadD family.

It catalyses the reaction nicotinate beta-D-ribonucleotide + ATP + H(+) = deamido-NAD(+) + diphosphate. It participates in cofactor biosynthesis; NAD(+) biosynthesis; deamido-NAD(+) from nicotinate D-ribonucleotide: step 1/1. In terms of biological role, catalyzes the reversible adenylation of nicotinate mononucleotide (NaMN) to nicotinic acid adenine dinucleotide (NaAD). This chain is Probable nicotinate-nucleotide adenylyltransferase, found in Borrelia garinii subsp. bavariensis (strain ATCC BAA-2496 / DSM 23469 / PBi) (Borreliella bavariensis).